A 195-amino-acid polypeptide reads, in one-letter code: HTH-type transcriptional regulator BetI (195 aa).

Residues 8-68 form the HTH tetR-type domain; it reads SIRRRQLIDA…ATMRDITSQL (61 aa). The segment at residues 31 to 50 is a DNA-binding region (H-T-H motif); sequence TIAQIARRAGVSTGIISHYF.

The protein operates within amine and polyamine biosynthesis; betaine biosynthesis via choline pathway [regulation]. In terms of biological role, repressor involved in the biosynthesis of the osmoprotectant glycine betaine. It represses transcription of the choline transporter BetT and the genes of BetAB involved in the synthesis of glycine betaine. This chain is HTH-type transcriptional regulator BetI, found in Escherichia coli O157:H7.